A 111-amino-acid chain; its full sequence is Nucleoid-associated protein PSEEN1789 (111 aa).

2 disordered regions span residues 1–25 and 89–111; these read MMKG…KMQE and NSQD…KMPF.

This sequence belongs to the YbaB/EbfC family. In terms of assembly, homodimer.

The protein resides in the cytoplasm. It localises to the nucleoid. Functionally, binds to DNA and alters its conformation. May be involved in regulation of gene expression, nucleoid organization and DNA protection. This chain is Nucleoid-associated protein PSEEN1789, found in Pseudomonas entomophila (strain L48).